A 351-amino-acid polypeptide reads, in one-letter code: Beta-hexosaminidase (351 aa).

Substrate contacts are provided by residues Asp-62, Arg-70, Arg-133, and 163-164; that span reads KH. The Proton donor/acceptor role is filled by His-176. Asp-248 acts as the Nucleophile in catalysis.

Belongs to the glycosyl hydrolase 3 family. NagZ subfamily. In terms of assembly, monomer.

It localises to the cytoplasm. The enzyme catalyses Hydrolysis of terminal non-reducing N-acetyl-D-hexosamine residues in N-acetyl-beta-D-hexosaminides.. The protein operates within cell wall biogenesis; peptidoglycan recycling. Functionally, plays a role in peptidoglycan recycling by cleaving the terminal beta-1,4-linked N-acetylglucosamine (GlcNAc) from peptide-linked peptidoglycan fragments, giving rise to free GlcNAc, anhydro-N-acetylmuramic acid and anhydro-N-acetylmuramic acid-linked peptides. In Haemophilus influenzae (strain ATCC 51907 / DSM 11121 / KW20 / Rd), this protein is Beta-hexosaminidase.